The primary structure comprises 376 residues: Erythronate-4-phosphate dehydrogenase (376 aa).

Residues S45 and T66 each coordinate substrate. NAD(+)-binding residues include D146 and T175. Residue R209 is part of the active site. Residue D233 participates in NAD(+) binding. E238 is a catalytic residue. Residue H255 is the Proton donor of the active site. G258 contacts NAD(+). Y259 contacts substrate.

Belongs to the D-isomer specific 2-hydroxyacid dehydrogenase family. PdxB subfamily. In terms of assembly, homodimer.

Its subcellular location is the cytoplasm. The enzyme catalyses 4-phospho-D-erythronate + NAD(+) = (R)-3-hydroxy-2-oxo-4-phosphooxybutanoate + NADH + H(+). It functions in the pathway cofactor biosynthesis; pyridoxine 5'-phosphate biosynthesis; pyridoxine 5'-phosphate from D-erythrose 4-phosphate: step 2/5. In terms of biological role, catalyzes the oxidation of erythronate-4-phosphate to 3-hydroxy-2-oxo-4-phosphonooxybutanoate. The polypeptide is Erythronate-4-phosphate dehydrogenase (Baumannia cicadellinicola subsp. Homalodisca coagulata).